The sequence spans 131 residues: Small ribosomal subunit protein uS8 (131 aa).

Belongs to the universal ribosomal protein uS8 family. In terms of assembly, part of the 30S ribosomal subunit. Contacts proteins S5 and S12.

Functionally, one of the primary rRNA binding proteins, it binds directly to 16S rRNA central domain where it helps coordinate assembly of the platform of the 30S subunit. The sequence is that of Small ribosomal subunit protein uS8 from Legionella pneumophila (strain Paris).